The sequence spans 179 residues: Large ribosomal subunit protein uL6 (179 aa).

The protein belongs to the universal ribosomal protein uL6 family. Part of the 50S ribosomal subunit.

Functionally, this protein binds to the 23S rRNA, and is important in its secondary structure. It is located near the subunit interface in the base of the L7/L12 stalk, and near the tRNA binding site of the peptidyltransferase center. This is Large ribosomal subunit protein uL6 from Prochlorococcus marinus (strain MIT 9313).